The following is a 151-amino-acid chain: Large ribosomal subunit protein bL9 (151 aa).

It belongs to the bacterial ribosomal protein bL9 family.

Its function is as follows. Binds to the 23S rRNA. In Lactobacillus delbrueckii subsp. bulgaricus (strain ATCC 11842 / DSM 20081 / BCRC 10696 / JCM 1002 / NBRC 13953 / NCIMB 11778 / NCTC 12712 / WDCM 00102 / Lb 14), this protein is Large ribosomal subunit protein bL9.